We begin with the raw amino-acid sequence, 350 residues long: Transmembrane protein 185B (350 aa).

7 helical membrane-spanning segments follow: residues Leu16–Ile36, Trp41–Gly61, Phe81–Val101, Phe111–Val131, Trp168–Tyr188, Val211–Leu231, and Met240–Thr260.

This sequence belongs to the TMEM185 family.

The protein resides in the membrane. This is Transmembrane protein 185B (TMEM185B) from Bos taurus (Bovine).